Here is a 208-residue protein sequence, read N- to C-terminus: A-type ATP synthase subunit E (208 aa).

This sequence belongs to the V-ATPase E subunit family. As to quaternary structure, has multiple subunits with at least A(3), B(3), C, D, E, F, H, I and proteolipid K(x).

It is found in the cell membrane. Functionally, component of the A-type ATP synthase that produces ATP from ADP in the presence of a proton gradient across the membrane. The chain is A-type ATP synthase subunit E from Ignicoccus hospitalis (strain KIN4/I / DSM 18386 / JCM 14125).